The sequence spans 174 residues: Adipose-secreted signaling protein (174 aa).

N-acetylalanine is present on Ala2. A Phosphothreonine modification is found at Thr147.

This sequence belongs to the ADISSP family.

The protein resides in the secreted. Functionally, adipocyte-secreted protein (adipokine) that acts as a key regulator for white adipose tissue (WAT) thermogenesis and glucose homeostasis at least in part through activation of protein kinase A (PKA). This chain is Adipose-secreted signaling protein, found in Rattus norvegicus (Rat).